We begin with the raw amino-acid sequence, 300 residues long: Nicotinate-nucleotide pyrophosphorylase [carboxylating] (300 aa).

The segment at Gln5–Lys9 is important for hexamer formation. Quinolinate is bound by residues Arg107, Arg150 to Lys151, His172 to Arg173, Lys183, Glu213, Asp234, Ser260 to Gly262, and Gly282.

It belongs to the NadC/ModD family. Hexamer formed by 3 homodimers.

The enzyme catalyses nicotinate beta-D-ribonucleotide + CO2 + diphosphate = quinolinate + 5-phospho-alpha-D-ribose 1-diphosphate + 2 H(+). It participates in cofactor biosynthesis; NAD(+) biosynthesis; nicotinate D-ribonucleotide from quinolinate: step 1/1. In terms of biological role, involved in the catabolism of quinolinic acid (QA). This is Nicotinate-nucleotide pyrophosphorylase [carboxylating] (qprt) from Dictyostelium discoideum (Social amoeba).